A 447-amino-acid chain; its full sequence is Phosphatidylinositol N-acetylglucosaminyltransferase subunit A (447 aa).

Residues methionine 1–arginine 387 lie on the Cytoplasmic side of the membrane. Residues phenylalanine 388–leucine 408 form a helical membrane-spanning segment. Over leucine 409–lysine 447 the chain is Lumenal.

Belongs to the glycosyltransferase group 1 family. Glycosyltransferase 4 subfamily. Expressed in roots, stems, leaves, flowers and pollen grains.

It is found in the endoplasmic reticulum membrane. It catalyses the reaction a 1,2-diacyl-sn-glycero-3-phospho-(1D-myo-inositol) + UDP-N-acetyl-alpha-D-glucosamine = a 6-(N-acetyl-alpha-D-glucosaminyl)-1-(1,2-diacyl-sn-glycero-3-phospho)-1D-myo-inositol + UDP + H(+). It functions in the pathway glycolipid biosynthesis; glycosylphosphatidylinositol-anchor biosynthesis. Functionally, necessary for the synthesis of N-acetylglucosaminyl-phosphatidylinositol, the very early intermediate in GPI-anchor biosynthesis. Required for pollen germination and pollen tube growth. This chain is Phosphatidylinositol N-acetylglucosaminyltransferase subunit A, found in Arabidopsis thaliana (Mouse-ear cress).